A 247-amino-acid chain; its full sequence is Leucyl/phenylalanyl-tRNA--protein transferase (247 aa).

The protein belongs to the L/F-transferase family.

It is found in the cytoplasm. The catalysed reaction is N-terminal L-lysyl-[protein] + L-leucyl-tRNA(Leu) = N-terminal L-leucyl-L-lysyl-[protein] + tRNA(Leu) + H(+). The enzyme catalyses N-terminal L-arginyl-[protein] + L-leucyl-tRNA(Leu) = N-terminal L-leucyl-L-arginyl-[protein] + tRNA(Leu) + H(+). It catalyses the reaction L-phenylalanyl-tRNA(Phe) + an N-terminal L-alpha-aminoacyl-[protein] = an N-terminal L-phenylalanyl-L-alpha-aminoacyl-[protein] + tRNA(Phe). In terms of biological role, functions in the N-end rule pathway of protein degradation where it conjugates Leu, Phe and, less efficiently, Met from aminoacyl-tRNAs to the N-termini of proteins containing an N-terminal arginine or lysine. The chain is Leucyl/phenylalanyl-tRNA--protein transferase from Solidesulfovibrio magneticus (strain ATCC 700980 / DSM 13731 / RS-1) (Desulfovibrio magneticus).